The primary structure comprises 214 residues: Adenylate kinase (214 aa).

Position 10 to 15 (10 to 15) interacts with ATP; the sequence is GAGKGT. An NMP region spans residues 30-59; sequence STGDMLRAAIKAGTELGKQAKAVIDAGQLV. AMP contacts are provided by residues Thr31, Arg36, 57-59, 85-88, and Gln92; these read QLV and GFPR. The interval 122-159 is LID; sequence GRRAHLPSGRTYHVVYNPPKVEGKDDVTGEDLVVRDDD. Residues Arg123 and 132–133 each bind ATP; that span reads TY. Residues Arg156 and Arg167 each coordinate AMP. An ATP-binding site is contributed by Lys200.

The protein belongs to the adenylate kinase family. Monomer.

It localises to the cytoplasm. The enzyme catalyses AMP + ATP = 2 ADP. It functions in the pathway purine metabolism; AMP biosynthesis via salvage pathway; AMP from ADP: step 1/1. Functionally, catalyzes the reversible transfer of the terminal phosphate group between ATP and AMP. Plays an important role in cellular energy homeostasis and in adenine nucleotide metabolism. This is Adenylate kinase from Vibrio campbellii (strain ATCC BAA-1116).